A 296-amino-acid chain; its full sequence is Lipoyl synthase (296 aa).

Residues C37, C42, C48, C63, C67, C70, and S276 each coordinate [4Fe-4S] cluster. Residues 49–265 (WSKKHTTVMI…ERVAKTKGFL (217 aa)) enclose the Radical SAM core domain.

It belongs to the radical SAM superfamily. Lipoyl synthase family. [4Fe-4S] cluster serves as cofactor.

Its subcellular location is the cytoplasm. The catalysed reaction is [[Fe-S] cluster scaffold protein carrying a second [4Fe-4S](2+) cluster] + N(6)-octanoyl-L-lysyl-[protein] + 2 oxidized [2Fe-2S]-[ferredoxin] + 2 S-adenosyl-L-methionine + 4 H(+) = [[Fe-S] cluster scaffold protein] + N(6)-[(R)-dihydrolipoyl]-L-lysyl-[protein] + 4 Fe(3+) + 2 hydrogen sulfide + 2 5'-deoxyadenosine + 2 L-methionine + 2 reduced [2Fe-2S]-[ferredoxin]. It participates in protein modification; protein lipoylation via endogenous pathway; protein N(6)-(lipoyl)lysine from octanoyl-[acyl-carrier-protein]: step 2/2. Its function is as follows. Catalyzes the radical-mediated insertion of two sulfur atoms into the C-6 and C-8 positions of the octanoyl moiety bound to the lipoyl domains of lipoate-dependent enzymes, thereby converting the octanoylated domains into lipoylated derivatives. This Rickettsia conorii (strain ATCC VR-613 / Malish 7) protein is Lipoyl synthase.